The following is a 97-amino-acid chain: MASSAELDFNLQALLEQLSQDELSKFKSLIRTISLGKELQTVPQTEVDKANGKQLVEIFTSHSCSYWAGMAAIQVFEKMNQTHLSGRADEHCVMPPP.

One can recognise a Pyrin domain in the interval 1-94; that stretch reads MASSAELDFN…SGRADEHCVM (94 aa).

Interacts with PYCARD/ASC (via pyrin domain). Interacts with NLRP2 (via pyrin domain). Predominantly expressed in peripheral blood. Weakly expressed in testis.

The protein localises to the cytoplasm. Its subcellular location is the nucleus. Its function is as follows. May play a role in innate immunity by disrupting the interaction between PYCARD and NLRP3, thereby regulating the NLRP3 inflammasome. May also inhibit NF-kappa-B signaling distally by affecting the nuclear accumulation of RELA. This Homo sapiens (Human) protein is Pyrin domain-containing protein 2.